The following is a 141-amino-acid chain: Galactose-6-phosphate isomerase subunit LacA (141 aa).

Belongs to the LacAB/RpiB family. As to quaternary structure, heteromultimeric protein consisting of LacA and LacB.

It carries out the reaction aldehydo-D-galactose 6-phosphate = keto-D-tagatose 6-phosphate. Its pathway is carbohydrate metabolism; D-galactose 6-phosphate degradation; D-tagatose 6-phosphate from D-galactose 6-phosphate: step 1/1. In Streptococcus pneumoniae (strain P1031), this protein is Galactose-6-phosphate isomerase subunit LacA.